A 201-amino-acid chain; its full sequence is Potassium-transporting ATPase KdpC subunit (201 aa).

Residues 12 to 34 (LLALTMITGLAYPLAVTGLATVL) form a helical membrane-spanning segment. Residues 73-102 (TVAPDPADSSKTVSAPYNAANSGGSNLGPT) form a disordered region. Residues 81–101 (SSKTVSAPYNAANSGGSNLGP) are compositionally biased toward polar residues.

Belongs to the KdpC family. The system is composed of three essential subunits: KdpA, KdpB and KdpC.

It localises to the cell inner membrane. In terms of biological role, part of the high-affinity ATP-driven potassium transport (or Kdp) system, which catalyzes the hydrolysis of ATP coupled with the electrogenic transport of potassium into the cytoplasm. This subunit acts as a catalytic chaperone that increases the ATP-binding affinity of the ATP-hydrolyzing subunit KdpB by the formation of a transient KdpB/KdpC/ATP ternary complex. This is Potassium-transporting ATPase KdpC subunit from Rhodopseudomonas palustris (strain ATCC BAA-98 / CGA009).